A 300-amino-acid polypeptide reads, in one-letter code: Free fatty acid receptor 1 (300 aa).

Over 1-8 (MDLPPQLS) the chain is Extracellular. A helical membrane pass occupies residues 9–31 (FALYVSAFALGFPLNLLAIRGAV). Over 32 to 41 (SHAKLRLTPS) the chain is Cytoplasmic. The chain crosses the membrane as a helical span at residues 42–64 (LVYTLHLACSDLLLAITLPLKAV). The Extracellular segment spans residues 65 to 79 (EALASGVWPLPLPFC). Residues cysteine 79 and cysteine 170 are joined by a disulfide bond. Residues 80–101 (PVFALAHFAPLYAGGGFLAALS) traverse the membrane as a helical segment. Over 102–121 (AGRYLGAAFPFGYQAIRRPC) the chain is Cytoplasmic. A helical membrane pass occupies residues 122-142 (YSWGVCVAIWALVLCHLGLAL). The Extracellular segment spans residues 143 to 178 (GLEAPRGWVDNTTSSLGINIPVNGSPVCLEAWDPDS). N-linked (GlcNAc...) asparagine glycosylation is present at asparagine 153. Residues 179-200 (ARPARLSFSILLFFLPLVITAF) form a helical membrane-spanning segment. Over 201–223 (CYVGCLRALVHSGLSHKRKLRAA) the chain is Cytoplasmic. A helical membrane pass occupies residues 224–248 (WVAGGALLTLLLCLGPYNASNVASF). Over 249–256 (INPDLEGS) the chain is Extracellular. A helical transmembrane segment spans residues 257–279 (WRKLGLITGAWSVVLNPLVTGYL). Residues 280 to 300 (GTGPGQGTICVTRTPRGTIQK) are Cytoplasmic-facing.

It belongs to the G-protein coupled receptor 1 family. In terms of tissue distribution, expressed abundantly in pancreatic beta cells.

The protein resides in the cell membrane. Functionally, G-protein coupled receptor for medium and long chain saturated and unsaturated fatty acids that plays an important role in glucose homeostasis. Fatty acid binding increases glucose-stimulated insulin secretion, and may also enhance the secretion of glucagon-like peptide 1 (GLP-1). May also play a role in bone homeostasis; receptor signaling activates pathways that inhibit osteoclast differentiation. Ligand binding leads to a conformation change that triggers signaling via G-proteins that activate phospholipase C, leading to an increase of the intracellular calcium concentration. Seems to act through a G(q) and G(i)-mediated pathway. Mediates the anti-inflammatory effects of omega-3 polyunsaturated fatty acids (PUFAs) via inhibition of NLRP3 inflammasome activation. This is Free fatty acid receptor 1 (Ffar1) from Rattus norvegicus (Rat).